A 269-amino-acid polypeptide reads, in one-letter code: GTP cyclohydrolase FolE2 (269 aa).

The protein belongs to the GTP cyclohydrolase IV family.

The enzyme catalyses GTP + H2O = 7,8-dihydroneopterin 3'-triphosphate + formate + H(+). It participates in cofactor biosynthesis; 7,8-dihydroneopterin triphosphate biosynthesis; 7,8-dihydroneopterin triphosphate from GTP: step 1/1. Converts GTP to 7,8-dihydroneopterin triphosphate. The protein is GTP cyclohydrolase FolE2 of Burkholderia ambifaria (strain MC40-6).